The chain runs to 55 residues: Large ribosomal subunit protein bL33 (55 aa).

The segment covering 1–11 (MAKGGREKIKL) has biased composition (basic and acidic residues). The disordered stretch occupies residues 1–29 (MAKGGREKIKLESTAGTGHFYTTTKNKKT). Positions 14–24 (TAGTGHFYTTT) are enriched in polar residues.

This sequence belongs to the bacterial ribosomal protein bL33 family.

The protein is Large ribosomal subunit protein bL33 of Thiobacillus denitrificans (strain ATCC 25259 / T1).